The following is a 620-amino-acid chain: MYND-type zinc finger protein MUB1 (620 aa).

The MYND-type; degenerate zinc-finger motif lies at 514–555 (NFSCGKWEDFPRQFAKCRRCKRTKYCSRKCQLKAWGYHRYWC). Zn(2+)-binding residues include Cys-530, Cys-533, His-551, and Cys-555. A compositionally biased stretch (polar residues) spans 563–606 (MRSTNTTTGVNTPNEPSSLNATATTAADVSNSTSTFTPNISTTV). Positions 563–620 (MRSTNTTTGVNTPNEPSSLNATATTAADVSNSTSTFTPNISTTVPDEISNRDENSIPE) are disordered. Over residues 610–620 (ISNRDENSIPE) the composition is skewed to basic and acidic residues.

This sequence belongs to the MUB1/samB family. As to quaternary structure, interacts with UBR2 and RPN4.

It is found in the cytoplasm. In terms of biological role, involved in the determination of the onset of polarized growth. Required for the ubiquitin-dependent degradation of RPN4. Cooperates with UBR2 to transfer ubiquitin from RAD6 to RPN4. The chain is MYND-type zinc finger protein MUB1 (MUB1) from Saccharomyces cerevisiae (strain ATCC 204508 / S288c) (Baker's yeast).